A 158-amino-acid polypeptide reads, in one-letter code: Transcription elongation factor GreA (158 aa).

Positions 53–73 form a coiled coil; it reads EQQSFIEGRIQEIEGKLSNAQ.

This sequence belongs to the GreA/GreB family.

Its function is as follows. Necessary for efficient RNA polymerase transcription elongation past template-encoded arresting sites. The arresting sites in DNA have the property of trapping a certain fraction of elongating RNA polymerases that pass through, resulting in locked ternary complexes. Cleavage of the nascent transcript by cleavage factors such as GreA or GreB allows the resumption of elongation from the new 3'terminus. GreA releases sequences of 2 to 3 nucleotides. This chain is Transcription elongation factor GreA, found in Halorhodospira halophila (strain DSM 244 / SL1) (Ectothiorhodospira halophila (strain DSM 244 / SL1)).